Here is a 394-residue protein sequence, read N- to C-terminus: Elongation factor Tu (394 aa).

A tr-type G domain is found at 10–204 (KPHVNVGTIG…ALDTYIPEPE (195 aa)). A G1 region spans residues 19 to 26 (GHVDHGKT). GTP is bound at residue 19–26 (GHVDHGKT). Position 26 (Thr-26) interacts with Mg(2+). The G2 stretch occupies residues 60–64 (GITIN). Residues 81–84 (DCPG) are G3. GTP contacts are provided by residues 81–85 (DCPGH) and 136–139 (NKCD). The interval 136-139 (NKCD) is G4. A G5 region spans residues 174–176 (SAL).

The protein belongs to the TRAFAC class translation factor GTPase superfamily. Classic translation factor GTPase family. EF-Tu/EF-1A subfamily. In terms of assembly, monomer.

Its subcellular location is the cytoplasm. It catalyses the reaction GTP + H2O = GDP + phosphate + H(+). Its function is as follows. GTP hydrolase that promotes the GTP-dependent binding of aminoacyl-tRNA to the A-site of ribosomes during protein biosynthesis. This chain is Elongation factor Tu, found in Shewanella denitrificans (strain OS217 / ATCC BAA-1090 / DSM 15013).